The following is a 106-amino-acid chain: Nucleoid-associated protein Nwi_0368 (106 aa).

The protein belongs to the YbaB/EbfC family. Homodimer.

Its subcellular location is the cytoplasm. The protein localises to the nucleoid. Its function is as follows. Binds to DNA and alters its conformation. May be involved in regulation of gene expression, nucleoid organization and DNA protection. The polypeptide is Nucleoid-associated protein Nwi_0368 (Nitrobacter winogradskyi (strain ATCC 25391 / DSM 10237 / CIP 104748 / NCIMB 11846 / Nb-255)).